The chain runs to 186 residues: Ion-translocating oxidoreductase complex subunit B (186 aa).

The interval 1–23 (MLTPILALTALALIAGALLGFAA) is hydrophobic. In terms of domain architecture, 4Fe-4S spans 29–88 (EGNPIADQVDAVLPQTQCGQCGFGGCRPYAEAIAAGEAEINRCPPGGQDTVQTLADLLGV). [4Fe-4S] cluster-binding residues include Cys-46, Cys-49, Cys-54, Cys-71, Cys-114, Cys-117, Cys-120, Cys-124, Cys-144, Cys-147, Cys-150, and Cys-154. 4Fe-4S ferredoxin-type domains follow at residues 105–134 (QVAW…GAAK) and 135–164 (QMHT…MVPV).

The protein belongs to the 4Fe4S bacterial-type ferredoxin family. RnfB subfamily. The complex is composed of six subunits: RnfA, RnfB, RnfC, RnfD, RnfE and RnfG. The cofactor is [4Fe-4S] cluster.

The protein resides in the cell inner membrane. Functionally, part of a membrane-bound complex that couples electron transfer with translocation of ions across the membrane. This chain is Ion-translocating oxidoreductase complex subunit B, found in Alkalilimnicola ehrlichii (strain ATCC BAA-1101 / DSM 17681 / MLHE-1).